Consider the following 209-residue polypeptide: Large ribosomal subunit protein uL3 (209 aa).

The segment covering 112-122 has biased composition (polar residues); the sequence is GTTRGHGTQGN. Residues 112–146 form a disordered region; the sequence is GTTRGHGTQGNIKRWGQSRGPETHGSRYHRIPGSM.

Belongs to the universal ribosomal protein uL3 family. As to quaternary structure, part of the 50S ribosomal subunit. Forms a cluster with proteins L14 and L19.

Its function is as follows. One of the primary rRNA binding proteins, it binds directly near the 3'-end of the 23S rRNA, where it nucleates assembly of the 50S subunit. This Lactobacillus johnsonii (strain CNCM I-12250 / La1 / NCC 533) protein is Large ribosomal subunit protein uL3.